A 255-amino-acid polypeptide reads, in one-letter code: Homeobox protein Hox-D4 (255 aa).

Residues 31–128 form a disordered region; that stretch reads EQGADYYGGG…KQPPPGTALK (98 aa). The span at 94–109 shows a compositional bias: pro residues; sequence EPCPAPPAPPPAPLPG. An Antp-type hexapeptide motif is present at residues 133 to 138; that stretch reads VYPWMK. The segment at residues 154 to 213 is a DNA-binding region (homeobox); it reads PKRSRTAYTRQQVLELEKEFHFNRYLTRRRRIEIAHTLCLSERQIKIWFQNRRMKWKKDH. The tract at residues 212 to 255 is disordered; it reads DHKLPNTKGRSSSSSSSSSCSSSVAPSQHLQPMAKDHHTDLTTL. A compositionally biased stretch (low complexity) spans 222–234; that stretch reads SSSSSSSSSCSSS. The segment covering 245–255 has biased composition (basic and acidic residues); the sequence is AKDHHTDLTTL.

Belongs to the Antp homeobox family. Deformed subfamily. In terms of assembly, forms a DNA-binding heterodimer with transcription factor PBX1.

It localises to the nucleus. Sequence-specific transcription factor which is part of a developmental regulatory system that provides cells with specific positional identities on the anterior-posterior axis. This is Homeobox protein Hox-D4 (HOXD4) from Gorilla gorilla gorilla (Western lowland gorilla).